We begin with the raw amino-acid sequence, 102 residues long: Small ribosomal subunit protein uS10 (102 aa).

Belongs to the universal ribosomal protein uS10 family. In terms of assembly, part of the 30S ribosomal subunit.

Functionally, involved in the binding of tRNA to the ribosomes. The sequence is that of Small ribosomal subunit protein uS10 from Clavibacter michiganensis subsp. michiganensis (strain NCPPB 382).